Consider the following 25-residue polypeptide: Unknown protein 7 (25 aa).

Residues 1–25 are disordered; sequence MENGKVHVASMSGLSMPHMNEMLEK.

In Pseudotsuga menziesii (Douglas-fir), this protein is Unknown protein 7.